The sequence spans 172 residues: Protein LHCP TRANSLOCATION DEFECT (172 aa).

The N-terminal 28 residues, 1 to 28, are a transit peptide targeting the chloroplast; the sequence is MASIPCTFQLSARASSASAAAAARRSPR. Residues 114–146 form an ANK repeat; that stretch reads PVDILLMLAASEGDKPKLEELLRAGAKYDVKDV.

It is found in the plastid. Its subcellular location is the chloroplast. Involved in the import of light-harvesting complex proteins (LHCP) and subsequent routing of these proteins to the chloroplast signal recognition particle (SRP) pathway. The protein is Protein LHCP TRANSLOCATION DEFECT (LTD) of Oryza sativa subsp. indica (Rice).